Reading from the N-terminus, the 260-residue chain is Pyridoxine 5'-phosphate synthase (260 aa).

3-amino-2-oxopropyl phosphate-binding residues include asparagine 10 and arginine 21. Catalysis depends on histidine 46, which acts as the Proton acceptor. 2 residues coordinate 1-deoxy-D-xylulose 5-phosphate: arginine 48 and histidine 53. Glutamate 76 (proton acceptor) is an active-site residue. Threonine 113 provides a ligand contact to 1-deoxy-D-xylulose 5-phosphate. Catalysis depends on histidine 204, which acts as the Proton donor. 3-amino-2-oxopropyl phosphate is bound by residues aspartate 205 and 227 to 228 (GH).

This sequence belongs to the PNP synthase family. As to quaternary structure, homooctamer; tetramer of dimers.

The protein localises to the cytoplasm. The enzyme catalyses 3-amino-2-oxopropyl phosphate + 1-deoxy-D-xylulose 5-phosphate = pyridoxine 5'-phosphate + phosphate + 2 H2O + H(+). It participates in cofactor biosynthesis; pyridoxine 5'-phosphate biosynthesis; pyridoxine 5'-phosphate from D-erythrose 4-phosphate: step 5/5. Its function is as follows. Catalyzes the complicated ring closure reaction between the two acyclic compounds 1-deoxy-D-xylulose-5-phosphate (DXP) and 3-amino-2-oxopropyl phosphate (1-amino-acetone-3-phosphate or AAP) to form pyridoxine 5'-phosphate (PNP) and inorganic phosphate. The sequence is that of Pyridoxine 5'-phosphate synthase from Xylella fastidiosa (strain M23).